We begin with the raw amino-acid sequence, 118 residues long: Basic phospholipase A2 PA-5 (118 aa).

7 disulfides stabilise this stretch: Cys11-Cys71, Cys27-Cys117, Cys29-Cys45, Cys44-Cys98, Cys51-Cys91, Cys60-Cys84, and Cys78-Cys89. Ca(2+) contacts are provided by Tyr28, Gly30, and Gly32. The active site involves His48. Asp49 is a binding site for Ca(2+). Residue Asp92 is part of the active site.

It belongs to the phospholipase A2 family. Group I subfamily. D49 sub-subfamily. Requires Ca(2+) as cofactor. Expressed by the venom gland.

It localises to the secreted. It catalyses the reaction a 1,2-diacyl-sn-glycero-3-phosphocholine + H2O = a 1-acyl-sn-glycero-3-phosphocholine + a fatty acid + H(+). In terms of biological role, PLA2 catalyzes the calcium-dependent hydrolysis of the 2-acyl groups in 3-sn-phosphoglycerides. This chain is Basic phospholipase A2 PA-5, found in Pseudechis australis (Mulga snake).